The primary structure comprises 560 residues: Clathrin interactor EPSIN 1 (560 aa).

The region spanning 20–152 (LKVLKVPEME…NNKEKISEIR (133 aa)) is the ENTH domain. Residues 190–288 (NFDSYKDRDS…KPSTGSANQV (99 aa)) are disordered. Basic and acidic residues predominate over residues 193–220 (SYKDRDSREDKNDYESFQKSRRGVKTEE). Residues 221–233 (QSYTSKKSFSRYG) show a composition bias toward polar residues. Residues 234-251 (STDHDNLSSGKKSPDSAK) are compositionally biased toward basic and acidic residues. Polar residues predominate over residues 274-287 (GTSSNKPSTGSANQ). The short motif at 296 to 300 (IGDFL) is the Clathrin binding element. Positions 320-322 (DLF) match the ALPHA-ADR binding motif. Polar residues predominate over residues 414–439 (SHSASVSTGPQAPSVHGSATNTTSPL). 2 disordered regions span residues 414–453 (SHSA…QKKD) and 517–560 (LGKT…GFKQ). A compositionally biased stretch (low complexity) spans 526 to 536 (QQQQQQQQQQQ). The segment covering 544-554 (FFSSLSNQRYQ) has biased composition (polar residues).

This sequence belongs to the epsin family. As to quaternary structure, interacts with clathrin, VTI11, GAMMA-ADR and VSR1. Binds to the deubiquitinating enzyme AMSH3. As to expression, mostly expressed in cotyledons and flowers, and, to a lower extent, in roots, leaves and siliques (at protein level).

Its subcellular location is the golgi apparatus. It localises to the prevacuolar compartment. The protein localises to the cytoplasm. The protein resides in the cytoplasmic vesicle. It is found in the clathrin-coated vesicle. Its subcellular location is the cytoskeleton. In terms of biological role, may have a role in transport via clathrin-coated vesicles from the trans-Golgi network to endosomes. Stimulates clathrin assembly. Does not seem to bind to phospholipids. Plays an important role in the vacuolar trafficking of soluble cargo proteins at the trans-Golgi network. This chain is Clathrin interactor EPSIN 1 (EPSIN1), found in Arabidopsis thaliana (Mouse-ear cress).